A 93-amino-acid chain; its full sequence is Small ribosomal subunit protein uS19 (93 aa).

This sequence belongs to the universal ribosomal protein uS19 family.

Functionally, protein S19 forms a complex with S13 that binds strongly to the 16S ribosomal RNA. In Ehrlichia ruminantium (strain Welgevonden), this protein is Small ribosomal subunit protein uS19.